A 152-amino-acid chain; its full sequence is UPF0266 membrane protein YobD (152 aa).

The next 3 membrane-spanning stretches (helical) occupy residues 6 to 26, 45 to 65, and 67 to 87; these read LVLI…QFIM, VDSV…VTSH, and AQMT…IFWI.

This sequence belongs to the UPF0266 family.

It localises to the cell inner membrane. The sequence is that of UPF0266 membrane protein YobD from Salmonella arizonae (strain ATCC BAA-731 / CDC346-86 / RSK2980).